A 623-amino-acid chain; its full sequence is Glutathione import ATP-binding protein GsiA (623 aa).

ABC transporter domains lie at 15–269 (VSGL…QTLL) and 325–564 (LRSG…RKLM). ATP-binding positions include 49 to 56 (GESGSGKS) and 357 to 364 (GESGSGKS).

It belongs to the ABC transporter superfamily. Glutathione importer (TC 3.A.1.5.11) family. In terms of assembly, the complex is composed of two ATP-binding proteins (GsiA), two transmembrane proteins (GsiC and GsiD) and a solute-binding protein (GsiB).

The protein resides in the cell inner membrane. The catalysed reaction is glutathione(out) + ATP + H2O = glutathione(in) + ADP + phosphate + H(+). Its function is as follows. Part of the ABC transporter complex GsiABCD involved in glutathione import. Responsible for energy coupling to the transport system. The protein is Glutathione import ATP-binding protein GsiA of Salmonella paratyphi A (strain ATCC 9150 / SARB42).